The chain runs to 112 residues: Cytoplasmic envelopment protein 3 (112 aa).

Glycine 2 is lipidated: N-myristoyl glycine; by host. The segment at 84 to 112 is disordered; that stretch reads GANKGGGKRTSSLKSAKNGAGVKKKVRAL.

Belongs to the herpesviridae cytoplasmic envelopment protein 3 family. As to quaternary structure, interacts with cytoplasmic envelopment protein 2; this interaction is essential for the proper localization of each protein to the assembly complex and thus for the production of infectious virus. Post-translationally, myristoylation and palmitoylation (probably on one or more of the nearby cysteines at the N-terminus) enable membrane-binding and Golgi apparatus-specific targeting and are essential for efficient packaging. In terms of processing, phosphorylated. Phosphorylation does not seem to be required for recycling to the host Golgi apparatus. Packaging is selective for underphosphorylated forms.

It localises to the virion tegument. The protein localises to the virion membrane. It is found in the host cell membrane. The protein resides in the host Golgi apparatus membrane. Plays an important role in the cytoplasmic envelopment of tegument proteins and capsids during the assembly and egress processes. Also participates in viral entry at the fusion step probably by regulating the core fusion machinery. This Murid herpesvirus 1 (strain K181) (MuHV-1) protein is Cytoplasmic envelopment protein 3 (UL99).